A 339-amino-acid chain; its full sequence is Tetraacyldisaccharide 4'-kinase (339 aa).

Position 44–51 (44–51) interacts with ATP; the sequence is TVGGTGKT.

Belongs to the LpxK family.

It carries out the reaction a lipid A disaccharide + ATP = a lipid IVA + ADP + H(+). Its pathway is glycolipid biosynthesis; lipid IV(A) biosynthesis; lipid IV(A) from (3R)-3-hydroxytetradecanoyl-[acyl-carrier-protein] and UDP-N-acetyl-alpha-D-glucosamine: step 6/6. In terms of biological role, transfers the gamma-phosphate of ATP to the 4'-position of a tetraacyldisaccharide 1-phosphate intermediate (termed DS-1-P) to form tetraacyldisaccharide 1,4'-bis-phosphate (lipid IVA). This Bdellovibrio bacteriovorus (strain ATCC 15356 / DSM 50701 / NCIMB 9529 / HD100) protein is Tetraacyldisaccharide 4'-kinase.